The sequence spans 585 residues: Trehalase (585 aa).

Residues methionine 1–alanine 32 form the signal peptide. Residues arginine 184 and tryptophan 191–aspartate 192 contribute to the substrate site. An N-linked (GlcNAc...) asparagine glycan is attached at asparagine 207. Substrate-binding positions include asparagine 228, arginine 237 to glutamine 239, arginine 302 to glutamate 304, and glycine 336. Residue aspartate 338 is the Proton donor/acceptor of the active site. The N-linked (GlcNAc...) asparagine glycan is linked to asparagine 348. Glutamate 535 functions as the Proton donor/acceptor in the catalytic mechanism. Position 550 (glutamate 550) interacts with substrate.

This sequence belongs to the glycosyl hydrolase 37 family. Expressed by the venom gland.

It is found in the secreted. The enzyme catalyses alpha,alpha-trehalose + H2O = alpha-D-glucose + beta-D-glucose. This is Trehalase (tre1) from Pimpla hypochondriaca (Parasitoid wasp).